The sequence spans 718 residues: Adhesin-like cell surface protein MAD1 (718 aa).

Residues 1–19 (MKGAIQFLGALAAVQAVSA) form the signal peptide. 9 repeat units span residues 217-243 (PCTEYSCTATDTTTEPAPTEPAPTEPA), 244-265 (PCTEYSCTATDTTTEPAPTEPA), 266-282 (PCTEYSCTATDTTTEPA), 283-309 (PCTEYSCTATDTTTEPAPTEPAPTEPA), 310-336 (PCTEYSCTATDTTTEPAPTEPAPTEPA), 337-358 (PCTEYSCTATDTTTEPAPTEPA), 359-382 (PCTEYSCTATETTSEAVPTTTDEA), 383-402 (PCTDYSCTATEAVPTTTDEA), and 403-420 (PCTEYSCTGVPTSEAVPT). The segment at 452–472 (TSIPYETPSPSETETLPPSGT) is disordered. The 114-residue stretch at 462–575 (SETETLPPSG…VTLPPVTTGA (114 aa)) folds into the CFEM domain. 3 disulfides stabilise this stretch: cysteine 494–cysteine 526, cysteine 504–cysteine 512, and cysteine 514–cysteine 548. Position 509 (aspartate 509) interacts with heme. The GPI-anchor amidated glycine moiety is linked to residue glycine 693. The propeptide at 694-718 (AASSFKAFSTVMLAGVIGLTALIMA) is removed in mature form.

The protein belongs to the RBT5 family. In terms of processing, the GPI-anchor is attached to the protein in the endoplasmic reticulum and serves to target the protein to the cell surface. There, the glucosamine-inositol phospholipid moiety is cleaved off and the GPI-modified mannoprotein is covalently attached via its lipidless GPI glycan remnant to the 1,6-beta-glucan of the outer cell wall layer.

Its subcellular location is the secreted. The protein localises to the cell wall. It is found in the cell membrane. Its function is as follows. Cell surface adhesion protein that plays a key role in switching between the saprophytic lifestyle and the predacious lifestyle (nematode trapping). Likely functions to prevent energy-consuming trap formation in the absence of nematodes, and keeps the fungus in the saprophytic life style. May influence the induction signal of trap formation by limiting the porosity of the cell wall and thus affecting its permeability of nitrogen source. The protein is Adhesin-like cell surface protein MAD1 of Arthrobotrys oligospora (strain ATCC 24927 / CBS 115.81 / DSM 1491) (Nematode-trapping fungus).